A 289-amino-acid chain; its full sequence is Carbonyl reductase [NADPH] 1 (289 aa).

Serine 2 bears the N-acetylserine mark. Phosphoserine is present on serine 2. NADP(+)-binding positions include 10–34 (VTGA…GDVV), 63–64 (DI), and asparagine 90. Glutathione contacts are provided by residues 95–97 (FQL) and glutamine 106. Position 140 (serine 140) interacts with substrate. 193-194 (TY) is a glutathione binding site. The active-site Proton acceptor is the tyrosine 194. NADP(+) is bound by residues 194-198 (YGVTK) and 231-233 (VRT). Lysine 239 is modified (N6-1-carboxyethyl lysine).

The protein belongs to the short-chain dehydrogenases/reductases (SDR) family. In terms of assembly, monomer. As to expression, expressed in kidney (at protein level).

It is found in the cytoplasm. The enzyme catalyses a secondary alcohol + NADP(+) = a ketone + NADPH + H(+). It carries out the reaction prostaglandin E1 + NADP(+) = 15-oxoprostaglandin E1 + NADPH + H(+). The catalysed reaction is prostaglandin F2alpha + NADP(+) = prostaglandin E2 + NADPH + H(+). It catalyses the reaction prostaglandin D2 + NADP(+) = 15-oxoprostaglandin D2 + NADPH + H(+). The enzyme catalyses prostaglandin E2 + NADP(+) = 15-oxoprostaglandin E2 + NADPH + H(+). It carries out the reaction prostaglandin F2alpha + NADP(+) = 15-oxoprostaglandin F2alpha + NADPH + H(+). The catalysed reaction is menadione + NADPH + H(+) = menadiol + NADP(+). It catalyses the reaction daunorubicin + NADPH + H(+) = 13-dihydrodaunorubicin + NADP(+). The enzyme catalyses S-nitrosoglutathione + NADPH + H(+) = S-(hydroxysulfenamide)glutathione + NADP(+). It carries out the reaction a primary alcohol + NADP(+) = an aldehyde + NADPH + H(+). The catalysed reaction is cortisol + NADPH + H(+) = 20beta-dihydrocortisol + NADP(+). It catalyses the reaction corticosterone + NADPH + H(+) = 20beta-dihydrocorticosterone + NADP(+). In terms of biological role, NADPH-dependent reductase with broad substrate specificity. Catalyzes the reduction of a wide variety of carbonyl compounds including quinones, prostaglandins, menadione, plus various xenobiotics. Catalyzes the reduction of the antitumor anthracyclines doxorubicin and daunorubicin to the cardiotoxic compounds doxorubicinol and daunorubicinol. Can convert prostaglandin E2 to prostaglandin F2-alpha. Can bind glutathione, which explains its higher affinity for glutathione-conjugated substrates. Catalyzes the reduction of S-nitrosoglutathione. In addition, participates in the glucocorticoid metabolism by catalyzing the NADPH-dependent cortisol/corticosterone into 20beta-dihydrocortisol (20b-DHF) or 20beta-corticosterone (20b-DHB), which are weak agonists of NR3C1 and NR3C2 in adipose tissue. This Sus scrofa (Pig) protein is Carbonyl reductase [NADPH] 1.